A 1009-amino-acid polypeptide reads, in one-letter code: Protein-tyrosine kinase 2-beta (1009 aa).

The region spanning 39-359 (RILKVCFYSN…GYCRLQGEHK (321 aa)) is the FERM domain. Phosphoserine is present on residues S361, S375, and S399. Position 402 is a phosphotyrosine; by autocatalysis (Y402). The Protein kinase domain occupies 425–683 (VVLNRILGEG…ELVCSLSDIY (259 aa)). ATP contacts are provided by residues 431–439 (LGEGFFGEV), K457, and 503–509 (ELYPYGE). Catalysis depends on D549, which acts as the Proton acceptor. Phosphotyrosine occurs at positions 579, 580, and 722. The interval 702–725 (PKILEPTAFQEPPPKPSRPKYKHP) is disordered. Position 762 is a phosphoserine (S762). T765 carries the phosphothreonine modification. The interaction with TGFB1I1 stretch occupies residues 801-1009 (KIKMRQVLDR…VANLAHPPAE (209 aa)). A Phosphotyrosine modification is found at Y834. Position 839 is a phosphoserine (S839). A Phosphothreonine modification is found at T842. A Phosphotyrosine modification is found at Y849. The residue at position 866 (S866) is a Phosphoserine. The focal adhesion targeting (FAT) stretch occupies residues 868 to 1009 (QPTANLDRTD…VANLAHPPAE (142 aa)). The residue at position 881 (Y881) is a Phosphotyrosine.

The protein belongs to the protein kinase superfamily. Tyr protein kinase family. FAK subfamily. Homodimer, or homooligomer. Interacts with NPHP1, ASAP1, ASAP2, ARHGAP26, SKAP2 and TGFB1I1. The Tyr-402 phosphorylated form interacts with SRC (via SH2 domain) and SRC family members. Forms a signaling complex with EPHA1, LCK and phosphatidylinositol 3-kinase; upon activation by EFNA1. Interacts with GRB2 (via SH2 domain). Interacts with P53/TP53 and MDM2. Interacts with MYLK. Interacts with BCAR1. Interacts with RB1CC1. Interacts with RHOU. Interacts with VAV1. Interacts with PDPK1. Interacts with LPXN and PTPN12. Interacts with SIRPA and SH2D3C. Interacts (hypophosphorylated) with PXN. Interacts with ARHGAP10. Interacts with KCNA2. In terms of processing, phosphorylated on tyrosine residues in response to various stimuli that elevate the intracellular calcium concentration; this activation is indirect and may be mediated by production of reactive oxygen species (ROS). Tyr-402 is the major autophosphorylation site, but other kinases can also phosphorylate Tyr-402. Autophosphorylation occurs in trans, i.e. one subunit of the dimeric receptor phosphorylates tyrosine residues on the other subunit. Phosphorylation at Tyr-402 promotes interaction with SRC and SRC family members, leading to phosphorylation at Tyr-579; Tyr-580 and Tyr-881. Phosphorylation at Tyr-881 is important for interaction with GRB2. Phosphorylated on tyrosine residues upon activation of FGR and PKC. Recruitment by NPHP1 to cell matrix adhesions initiates Tyr-402 phosphorylation. In monocytes, adherence to substrata is required for tyrosine phosphorylation and kinase activation. Angiotensin II, thapsigargin and L-alpha-lysophosphatidic acid (LPA) also induce autophosphorylation and increase kinase activity. Phosphorylation by MYLK promotes ITGB2 activation and is thus essential to trigger neutrophil transmigration during lung injury. Dephosphorylated by PTPN12. Highly expressed in pulmonary vein endothelial cells, lung and brain (at protein level). Isoform 1 is expressed at high levels in the brain (hippocampus, cerebral cortex and olfactory bulb) and poorly in the spleen and other tissues, whereas isoforms 2 and 3 are expressed in the spleen and brain (highest in cerebellum).

Its subcellular location is the cytoplasm. The protein resides in the perinuclear region. It localises to the cell membrane. It is found in the cell projection. The protein localises to the lamellipodium. Its subcellular location is the cell cortex. The protein resides in the nucleus. It localises to the cell junction. It is found in the focal adhesion. It catalyses the reaction L-tyrosyl-[protein] + ATP = O-phospho-L-tyrosyl-[protein] + ADP + H(+). With respect to regulation, activated in response to stimuli that lead to increased intracellular Ca(2+) levels; this activation is indirect and may be mediated by calcium-mediated production of reactive oxygen species (ROS). Activated by autophosphorylation at Tyr-402; this creates a binding site for SRC family kinases and leads to phosphorylation at additional tyrosine residues. Phosphorylation at Tyr-402, Tyr-579 and Tyr-580 is required for optimal kinase activity. Its function is as follows. Non-receptor protein-tyrosine kinase that regulates reorganization of the actin cytoskeleton, cell polarization, cell migration, adhesion, spreading and bone remodeling. Plays a role in the regulation of the humoral immune response, and is required for normal levels of marginal B-cells in the spleen and normal migration of splenic B-cells. Required for normal macrophage polarization and migration towards sites of inflammation. Regulates cytoskeleton rearrangement and cell spreading in T-cells, and contributes to the regulation of T-cell responses. Promotes osteoclastic bone resorption; this requires both PTK2B/PYK2 and SRC. May inhibit differentiation and activity of osteoprogenitor cells. Functions in signaling downstream of integrin and collagen receptors, immune receptors, G-protein coupled receptors (GPCR), cytokine, chemokine and growth factor receptors, and mediates responses to cellular stress. Forms multisubunit signaling complexes with SRC and SRC family members upon activation; this leads to the phosphorylation of additional tyrosine residues, creating binding sites for scaffold proteins, effectors and substrates. Regulates numerous signaling pathways. Promotes activation of phosphatidylinositol 3-kinase and of the AKT1 signaling cascade. Promotes activation of NOS3. Regulates production of the cellular messenger cGMP. Promotes activation of the MAP kinase signaling cascade, including activation of MAPK1/ERK2, MAPK3/ERK1 and MAPK8/JNK1. Promotes activation of Rho family GTPases, such as RHOA and RAC1. Recruits the ubiquitin ligase MDM2 to P53/TP53 in the nucleus, and thereby regulates P53/TP53 activity, P53/TP53 ubiquitination and proteasomal degradation. Acts as a scaffold, binding to both PDPK1 and SRC, thereby allowing SRC to phosphorylate PDPK1 at 'Tyr-9, 'Tyr-373', and 'Tyr-376'. Promotes phosphorylation of NMDA receptors by SRC family members, and thereby contributes to the regulation of NMDA receptor ion channel activity and intracellular Ca(2+) levels. May also regulate potassium ion transport by phosphorylation of potassium channel subunits. Phosphorylates SRC; this increases SRC kinase activity. Phosphorylates ASAP1, NPHP1, KCNA2 and SHC1. Promotes phosphorylation of ASAP2, RHOU and PXN; this requires both SRC and PTK2/PYK2. This Rattus norvegicus (Rat) protein is Protein-tyrosine kinase 2-beta (Ptk2b).